The sequence spans 119 residues: MTQQGAALQNYNNELVKCIEELCQKREELCRQIQEEEDEKQRLQNEVRQLTEKLARVNENLARKIASRNEFDRTIAETEAAYLKILESSQTLLSVLKREAGNLTKATAPDQKSSGGRDS.

Thr-2 is modified (N-acetylthreonine). Positions 2–32 (TQQGAALQNYNNELVKCIEELCQKREELCRQ) are important for localization to the centrosome. A coiled-coil region spans residues 13–70 (NELVKCIEELCQKREELCRQIQEEEDEKQRLQNEVRQLTEKLARVNENLARKIASRNE).

It belongs to the SSNA1 family. In terms of assembly, self-associates to form fibrils. Also forms dimers as well as monomers. Interacts with SPAST. Widely expressed.

It localises to the nucleus. The protein resides in the cytoplasm. Its subcellular location is the cytoskeleton. It is found in the microtubule organizing center. The protein localises to the centrosome. It localises to the centriole. The protein resides in the midbody. Its subcellular location is the flagellum basal body. It is found in the flagellum axoneme. The protein localises to the cell projection. It localises to the axon. Microtubule-binding protein which stabilizes dynamic microtubules by slowing growth and shrinkage at both plus and minus ends and serves as a sensor of microtubule damage, protecting microtubules from the microtubule-severing enzyme SPAST. Induces microtubule branching which is mediated by the formation of long SSNA1 fibrils which guide microtubule protofilaments to split apart from the mother microtubule and form daughter microtubules. Plays a role in axon outgrowth and branching. Required for cell division. The chain is Microtubule nucleation factor SSNA1 from Homo sapiens (Human).